We begin with the raw amino-acid sequence, 217 residues long: GTP-binding protein Rit2 (217 aa).

GTP is bound by residues 27 to 34 (GAGGVGKS), 74 to 78 (DTAGQ), and 133 to 136 (NKID).

It belongs to the small GTPase superfamily. Ras family. In terms of assembly, interacts with AFDN, the C-terminal domain of RALGDS and RLF, but not with RIN1 and PIK3CA. RLF binds exclusively to the active GTP-bound form. Binds calmodulin. Interacts with PLXNB3.

The protein localises to the nucleus. It localises to the cell membrane. It catalyses the reaction GTP + H2O = GDP + phosphate + H(+). With respect to regulation, alternates between an inactive form bound to GDP and an active form bound to GTP. Functionally, binds and exchanges GTP and GDP. This is GTP-binding protein Rit2 (Rit2) from Rattus norvegicus (Rat).